Reading from the N-terminus, the 700-residue chain is E3 ubiquitin-protein ligase SspH1 (700 aa).

The segment at 1–395 (MFNIRNTQPS…HSGIRIHFDM (395 aa)) is interaction with target proteins. LRR repeat units follow at residues 217-238 (HITT…PEGL), 239-257 (RELE…SLPQ), 258-279 (GLQK…PPGL), 280-297 (GDLA…EMPP), 298-319 (ALRE…PSGL), 320-337 (QKLW…EMSP), 338-360 (GLQE…TGLS), and 361-381 (SAAR…QALR). The interval 396-403 (AGPSVPRE) is linker. The segment at 404 to 700 (ARALHLAVAD…SYLTARWRLN (297 aa)) is E3 ubiquitin-protein ligase catalytic domain. The NEL domain maps to 406–700 (ALHLAVADWL…SYLTARWRLN (295 aa)). Residue Cys492 is the Glycyl thioester intermediate of the active site.

This sequence belongs to the LRR-containing bacterial E3 ligase family. As to quaternary structure, interacts (via leucine-rich repeat region) with host PKN1 (via the second REM repeat). In terms of processing, ubiquitinated in the presence of host E1 ubiquitin-activating enzyme, E2 ubiquitin-conjugating enzyme and ubiquitin.

The protein resides in the secreted. It localises to the host cytoplasm. The protein localises to the host nucleus. The enzyme catalyses S-ubiquitinyl-[E2 ubiquitin-conjugating enzyme]-L-cysteine + [acceptor protein]-L-lysine = [E2 ubiquitin-conjugating enzyme]-L-cysteine + N(6)-ubiquitinyl-[acceptor protein]-L-lysine.. Exists in an autoinhibited state in the absence of substrate protein, due to interactions of the leucine-rich repeat domain with the catalytic domain. Is activated upon binding to a substrate protein. In terms of biological role, effector proteins function to alter host cell physiology and promote bacterial survival in host tissues. This protein is an E3 ubiquitin-protein ligase that interferes with the host's ubiquitination pathway and targets host proteins for proteasomal degradation. Can ubiquitinate ubiquitin, giving rise to polyubiquitin chains (in vitro). Polyubiquitinates host PKN1, leading to its proteasomal degradation. Down-modulates production of host pro-inflammatory cytokines by inhibiting NF-kappa-B-dependent gene expression; this depends only partially on its E3 ubiquitin-protein ligase activity. This Salmonella typhimurium (strain 14028s / SGSC 2262) protein is E3 ubiquitin-protein ligase SspH1 (sspH1).